Reading from the N-terminus, the 394-residue chain is Ketoisovalerate oxidoreductase subunit VorA (394 aa).

Heterotetramer of one alpha, one beta, one delta and one gamma chain.

The enzyme catalyses 3-methyl-2-oxobutanoate + 2 oxidized [2Fe-2S]-[ferredoxin] + CoA = 2-methylpropanoyl-CoA + 2 reduced [2Fe-2S]-[ferredoxin] + CO2 + H(+). This chain is Ketoisovalerate oxidoreductase subunit VorA (vorA), found in Pyrococcus furiosus (strain ATCC 43587 / DSM 3638 / JCM 8422 / Vc1).